Consider the following 169-residue polypeptide: Cell division inhibitor SulA (169 aa).

Residues 106 to 112 form a ftsZ binding region; sequence ALRTGNY. Residues 162–169 form a lon protease binding region; sequence KIHSNLYH.

Belongs to the SulA family. In terms of assembly, interacts with FtsZ. Post-translationally, is rapidly cleaved and degraded by the Lon protease once DNA damage is repaired.

In terms of biological role, component of the SOS system and an inhibitor of cell division. Accumulation of SulA causes rapid cessation of cell division and the appearance of long, non-septate filaments. In the presence of GTP, binds a polymerization-competent form of FtsZ in a 1:1 ratio, thus inhibiting FtsZ polymerization and therefore preventing it from participating in the assembly of the Z ring. This mechanism prevents the premature segregation of damaged DNA to daughter cells during cell division. The chain is Cell division inhibitor SulA from Salmonella arizonae (strain ATCC BAA-731 / CDC346-86 / RSK2980).